Reading from the N-terminus, the 148-residue chain is Photosystem II extrinsic protein U, chloroplastic (148 aa).

The N-terminal 32 residues, 1–32 (MKLAVFAVLISTVAAFVAPNGVQRAATTELNA), are a transit peptide targeting the chloroplast. The N-terminal 22 residues, 33–54 (ERREFLSAAAVAAGLAFPLTAN), are a transit peptide targeting the thylakoid.

Belongs to the PsbU family. PSII is composed of 1 copy each of membrane proteins PsbA, PsbB, PsbC, PsbD, PsbE, PsbF, PsbH, PsbI, PsbJ, PsbK, PsbL, PsbM, PsbT, PsbX, PsbY, PsbZ, Psb30/Ycf12, at least 3 peripheral proteins of the oxygen-evolving complex and a large number of cofactors. It forms dimeric complexes. The oxygen-evolving complex may be composed of PsbO, PsbQ', PsbV and PsbU.

It is found in the plastid. The protein resides in the chloroplast thylakoid membrane. Functionally, one of the extrinsic, lumenal subunits of photosystem II (PSII), which stabilize and protect the oxygen-evolving complex. PSII is a light-driven water plastoquinone oxidoreductase, using light energy to abstract electrons from H(2)O, generating a proton gradient subsequently used for ATP formation. Stabilizes the structure of photosystem II oxygen-evolving complex (OEC), the ion environment of oxygen evolution and protects the OEC against heat-induced inactivation. The protein is Photosystem II extrinsic protein U, chloroplastic of Phaeodactylum tricornutum (Diatom).